A 115-amino-acid chain; its full sequence is Ribonuclease P protein component (115 aa).

It belongs to the RnpA family. Consists of a catalytic RNA component (M1 or rnpB) and a protein subunit.

It carries out the reaction Endonucleolytic cleavage of RNA, removing 5'-extranucleotides from tRNA precursor.. RNaseP catalyzes the removal of the 5'-leader sequence from pre-tRNA to produce the mature 5'-terminus. It can also cleave other RNA substrates such as 4.5S RNA. The protein component plays an auxiliary but essential role in vivo by binding to the 5'-leader sequence and broadening the substrate specificity of the ribozyme. The polypeptide is Ribonuclease P protein component (Staphylococcus carnosus (strain TM300)).